The sequence spans 335 residues: GTPase Obg (335 aa).

One can recognise an Obg domain in the interval 4-162 (GNFVDYTKIY…ADIVLELKVL (159 aa)). An OBG-type G domain is found at 163-332 (ADVGLVGFPN…LKDKLWAMLN (170 aa)). GTP contacts are provided by residues 169 to 176 (GFPNAGKS), 194 to 198 (FTTLK), 216 to 219 (DIPG), 283 to 286 (SKCD), and 313 to 315 (SSI). Positions 176 and 196 each coordinate Mg(2+).

It belongs to the TRAFAC class OBG-HflX-like GTPase superfamily. OBG GTPase family. In terms of assembly, monomer. The cofactor is Mg(2+).

It localises to the cytoplasm. Functionally, an essential GTPase which binds GTP, GDP and possibly (p)ppGpp with moderate affinity, with high nucleotide exchange rates and a fairly low GTP hydrolysis rate. Plays a role in control of the cell cycle, stress response, ribosome biogenesis and in those bacteria that undergo differentiation, in morphogenesis control. The chain is GTPase Obg from Flavobacterium psychrophilum (strain ATCC 49511 / DSM 21280 / CIP 103535 / JIP02/86).